Consider the following 330-residue polypeptide: Aspartate--ammonia ligase (330 aa).

The protein belongs to the class-II aminoacyl-tRNA synthetase family. AsnA subfamily.

The protein resides in the cytoplasm. The enzyme catalyses L-aspartate + NH4(+) + ATP = L-asparagine + AMP + diphosphate + H(+). Its pathway is amino-acid biosynthesis; L-asparagine biosynthesis; L-asparagine from L-aspartate (ammonia route): step 1/1. This Haemophilus influenzae (strain PittEE) protein is Aspartate--ammonia ligase.